The chain runs to 628 residues: 1-deoxy-D-xylulose-5-phosphate synthase (628 aa).

Thiamine diphosphate is bound by residues His-72 and 113-115; that span reads GHA. Asp-144 provides a ligand contact to Mg(2+). Thiamine diphosphate contacts are provided by residues 145 to 146, Asn-174, Tyr-287, and Glu-370; that span reads GA. Residue Asn-174 coordinates Mg(2+).

Belongs to the transketolase family. DXPS subfamily. In terms of assembly, homodimer. Mg(2+) serves as cofactor. Requires thiamine diphosphate as cofactor.

It catalyses the reaction D-glyceraldehyde 3-phosphate + pyruvate + H(+) = 1-deoxy-D-xylulose 5-phosphate + CO2. It participates in metabolic intermediate biosynthesis; 1-deoxy-D-xylulose 5-phosphate biosynthesis; 1-deoxy-D-xylulose 5-phosphate from D-glyceraldehyde 3-phosphate and pyruvate: step 1/1. Its function is as follows. Catalyzes the acyloin condensation reaction between C atoms 2 and 3 of pyruvate and glyceraldehyde 3-phosphate to yield 1-deoxy-D-xylulose-5-phosphate (DXP). This Prochlorococcus marinus (strain NATL2A) protein is 1-deoxy-D-xylulose-5-phosphate synthase.